We begin with the raw amino-acid sequence, 428 residues long: ATP phosphoribosyltransferase regulatory subunit (428 aa).

Belongs to the class-II aminoacyl-tRNA synthetase family. HisZ subfamily. In terms of assembly, heteromultimer composed of HisG and HisZ subunits.

It is found in the cytoplasm. It functions in the pathway amino-acid biosynthesis; L-histidine biosynthesis; L-histidine from 5-phospho-alpha-D-ribose 1-diphosphate: step 1/9. Required for the first step of histidine biosynthesis. May allow the feedback regulation of ATP phosphoribosyltransferase activity by histidine. The polypeptide is ATP phosphoribosyltransferase regulatory subunit (Syntrophotalea carbinolica (strain DSM 2380 / NBRC 103641 / GraBd1) (Pelobacter carbinolicus)).